A 276-amino-acid chain; its full sequence is MSARWTSAVLDPQITGGWAVARSPEGFLVDANGALFPRDWLKRQDLDVLAEHGIGHFDGEPVFLLELRSTAEVPGCGWRGLRSFMLEGDFDLYKVLGYAAQIGTWAREHRFCGSCGQPMTQIRWERAMYCQPCDLRSYPRISPSMIVLVTRGDEILLARSPRFVTGVYSTLAGFAEPGESAEDCLVREVREEVAVEVTNIQYVGSQCWPFPHSMMLGFHAEYAGGEIVMQPDEIEDARWFNVHDLPPLPAGRSIARYLIDLYVARRSGLPEPVLPR.

Arg82 is a substrate binding site. Residues Cys112 and Cys115 each contribute to the Zn(2+) site. Glu125 is a binding site for substrate. Residues Cys130 and Cys133 each coordinate Zn(2+). Tyr138 contributes to the substrate binding site. The Nudix hydrolase domain occupies 139–262 (PRISPSMIVL…SIARYLIDLY (124 aa)). A divalent metal cation contacts are provided by Ala172, Glu188, and Glu192. A Nudix box motif is present at residues 173 to 194 (GFAEPGESAEDCLVREVREEVA). Position 206–213 (206–213 (QCWPFPHS)) interacts with substrate. Residue Glu233 coordinates a divalent metal cation. Ala255 contributes to the substrate binding site.

Belongs to the Nudix hydrolase family. NudC subfamily. As to quaternary structure, homodimer. The cofactor is Mg(2+). Requires Mn(2+) as cofactor. Zn(2+) is required as a cofactor.

It catalyses the reaction a 5'-end NAD(+)-phospho-ribonucleoside in mRNA + H2O = a 5'-end phospho-adenosine-phospho-ribonucleoside in mRNA + beta-nicotinamide D-ribonucleotide + 2 H(+). The catalysed reaction is NAD(+) + H2O = beta-nicotinamide D-ribonucleotide + AMP + 2 H(+). The enzyme catalyses NADH + H2O = reduced beta-nicotinamide D-ribonucleotide + AMP + 2 H(+). MRNA decapping enzyme that specifically removes the nicotinamide adenine dinucleotide (NAD) cap from a subset of mRNAs by hydrolyzing the diphosphate linkage to produce nicotinamide mononucleotide (NMN) and 5' monophosphate mRNA. The NAD-cap is present at the 5'-end of some mRNAs and stabilizes RNA against 5'-processing. Has preference for mRNAs with a 5'-end purine. Catalyzes the hydrolysis of a broad range of dinucleotide pyrophosphates. This is NAD-capped RNA hydrolase NudC from Pseudomonas putida (strain W619).